The chain runs to 557 residues: Putative sensory transducer protein (557 aa).

Residues 122-145 (TASTVMIVVIFVGILIAIALGVFI) form a helical membrane-spanning segment. The 53-residue stretch at 147-199 (RIISKPIGQMVEAADRLALGDVEVDVKAETRDEIGKLAESFKRMIENIREQAY) folds into the HAMP domain. The 230-residue stretch at 243-472 (VAAQVAAGAK…ESAAASEELS (230 aa)) folds into the Methyl-accepting transducer domain. Q268 is subject to Glutamate methyl ester (Gln). E274 is modified (glutamate methyl ester (Glu)). Q281 is modified (glutamate methyl ester (Gln)). E463 is subject to Glutamate methyl ester (Glu). The span at 511–541 (DYTENKQPKSYSKEENGEYSDGKETAEKDVG) shows a compositional bias: basic and acidic residues. The segment at 511-542 (DYTENKQPKSYSKEENGEYSDGKETAEKDVGG) is disordered.

It belongs to the methyl-accepting chemotaxis (MCP) protein family.

Its subcellular location is the cell membrane. Its function is as follows. May bind attractants or detect changes in the extracellular concentration of soluble sugars. This Acetivibrio thermocellus (strain ATCC 27405 / DSM 1237 / JCM 9322 / NBRC 103400 / NCIMB 10682 / NRRL B-4536 / VPI 7372) (Clostridium thermocellum) protein is Putative sensory transducer protein.